Reading from the N-terminus, the 102-residue chain is MTGQNIRIRLKAFDHRILDASTREIVSTAKRTGASVRGPVPLPTRIEKFTVNRSPHVDKKSREQFEMRTHKRLLDIVDPTPQTVDALMKLDLAAGVDVEIKL.

The protein belongs to the universal ribosomal protein uS10 family. As to quaternary structure, part of the 30S ribosomal subunit.

In terms of biological role, involved in the binding of tRNA to the ribosomes. The polypeptide is Small ribosomal subunit protein uS10 (Agrobacterium fabrum (strain C58 / ATCC 33970) (Agrobacterium tumefaciens (strain C58))).